The primary structure comprises 91 residues: uncharacterized protein (91 aa).

This is an uncharacterized protein from Kluyveromyces lactis (strain ATCC 8585 / CBS 2359 / DSM 70799 / NBRC 1267 / NRRL Y-1140 / WM37) (Yeast).